A 942-amino-acid polypeptide reads, in one-letter code: DDB1- and CUL4-associated factor 5 (942 aa).

WD repeat units follow at residues 51 to 91, 99 to 139, 140 to 180, 185 to 225, 277 to 317, and 331 to 370; these read GHFG…HSRV, EHHS…LDVF, AHED…HGEP, NYPS…SSLL, FNSC…EAGG, and GHRSIVNQVRFNPHTYMICSSGVEKIIKIWSPYKQPGCTG. 2 disordered regions span residues 449–478 and 490–509; these read GVSERSGYTDSESSASLPRSPPPTVDESAD and TTNTVASTPPTPTCEDAASR. Over residues 454 to 465 the composition is skewed to polar residues; the sequence is SGYTDSESSASL. Position 500 is a phosphothreonine (T500). Phosphoserine is present on residues S531, S533, S626, S628, S645, S648, and S651. Disordered stretches follow at residues 544–655, 676–824, and 889–942; these read TDLF…DIES, NNKD…EERS, and ACET…KLKT. The span at 625–641 shows a compositional bias: low complexity; that stretch reads LSSSPTSSPERSTSTLE. Composition is skewed to basic and acidic residues over residues 690–701 and 728–738; these read DEGRAGTSHKDN and CSKDTFKEETP. Residues 760 to 770 are compositionally biased toward polar residues; that stretch reads GTSQDTGNSGS. Position 794 is a phosphoserine (S794). Over residues 801 to 815 the composition is skewed to polar residues; sequence SGSTLNSGSGNCPRT.

In terms of assembly, interacts with DDB1, CUL4A or CUL4B. Interacts with L3MBTL3. Interacts with DNMT1. Interacts with E2F1. Interacts with SOX2. Ubiquitous.

It functions in the pathway protein modification; protein ubiquitination. Is a substrate receptor for the CUL4-DDB1 E3 ubiquitin-protein ligase complex (CRL4). The complex CRL4-DCAF5 is involved in the ubiquitination of a set of methylated non-histone proteins, including SOX2, DNMT1 and E2F1. The protein is DDB1- and CUL4-associated factor 5 (DCAF5) of Homo sapiens (Human).